Reading from the N-terminus, the 399-residue chain is Acetate kinase (399 aa).

Asparagine 10 provides a ligand contact to Mg(2+). Lysine 17 provides a ligand contact to ATP. Arginine 91 is a substrate binding site. Aspartate 148 acts as the Proton donor/acceptor in catalysis. Residues 208-212 (HLGNG), 283-285 (DCR), and 331-335 (GIGEN) each bind ATP. Glutamate 385 is a binding site for Mg(2+).

The protein belongs to the acetokinase family. As to quaternary structure, homodimer. Requires Mg(2+) as cofactor. Mn(2+) is required as a cofactor.

It is found in the cytoplasm. The enzyme catalyses acetate + ATP = acetyl phosphate + ADP. The protein operates within metabolic intermediate biosynthesis; acetyl-CoA biosynthesis; acetyl-CoA from acetate: step 1/2. Catalyzes the formation of acetyl phosphate from acetate and ATP. Can also catalyze the reverse reaction. This Shewanella sp. (strain MR-4) protein is Acetate kinase.